The primary structure comprises 342 residues: Uroporphyrinogen decarboxylase (342 aa).

Substrate is bound by residues 24 to 28, Asp74, Tyr149, Ser204, and His319; that span reads RQAGR.

This sequence belongs to the uroporphyrinogen decarboxylase family. As to quaternary structure, homodimer.

The protein localises to the cytoplasm. The catalysed reaction is uroporphyrinogen III + 4 H(+) = coproporphyrinogen III + 4 CO2. It participates in porphyrin-containing compound metabolism; protoporphyrin-IX biosynthesis; coproporphyrinogen-III from 5-aminolevulinate: step 4/4. In terms of biological role, catalyzes the decarboxylation of four acetate groups of uroporphyrinogen-III to yield coproporphyrinogen-III. This chain is Uroporphyrinogen decarboxylase, found in Chelativorans sp. (strain BNC1).